A 555-amino-acid chain; its full sequence is Formate--tetrahydrofolate ligase (555 aa).

ATP is bound at residue 65–72 (TPAGEGKT).

It belongs to the formate--tetrahydrofolate ligase family.

It carries out the reaction (6S)-5,6,7,8-tetrahydrofolate + formate + ATP = (6R)-10-formyltetrahydrofolate + ADP + phosphate. The protein operates within one-carbon metabolism; tetrahydrofolate interconversion. The sequence is that of Formate--tetrahydrofolate ligase from Paracoccus denitrificans (strain Pd 1222).